The primary structure comprises 943 residues: Isoleucine--tRNA ligase (943 aa).

Residues Pro58–His68 carry the 'HIGH' region motif. Glu567 is an L-isoleucyl-5'-AMP binding site. Residues Lys608–Ser612 carry the 'KMSKS' region motif. Lys611 lines the ATP pocket. Zn(2+)-binding residues include Cys906, Cys909, Cys926, and Cys929.

Belongs to the class-I aminoacyl-tRNA synthetase family. IleS type 1 subfamily. In terms of assembly, monomer. Zn(2+) serves as cofactor.

The protein localises to the cytoplasm. It catalyses the reaction tRNA(Ile) + L-isoleucine + ATP = L-isoleucyl-tRNA(Ile) + AMP + diphosphate. In terms of biological role, catalyzes the attachment of isoleucine to tRNA(Ile). As IleRS can inadvertently accommodate and process structurally similar amino acids such as valine, to avoid such errors it has two additional distinct tRNA(Ile)-dependent editing activities. One activity is designated as 'pretransfer' editing and involves the hydrolysis of activated Val-AMP. The other activity is designated 'posttransfer' editing and involves deacylation of mischarged Val-tRNA(Ile). The sequence is that of Isoleucine--tRNA ligase from Pseudomonas paraeruginosa (strain DSM 24068 / PA7) (Pseudomonas aeruginosa (strain PA7)).